The following is a 311-amino-acid chain: tRNA (cytosine(49)-C(5))-methyltransferase (311 aa).

S-adenosyl-L-methionine contacts are provided by residues 118 to 124, Asp-142, Asp-169, and Asp-186; that span reads AAAPGSK. Cys-239 functions as the Nucleophile in the catalytic mechanism.

The protein belongs to the class I-like SAM-binding methyltransferase superfamily. RsmB/NOP family. As to quaternary structure, forms a tripartite complex with archease and tRNA. Binds only the oligomeric forms of the archease.

Its subcellular location is the cytoplasm. It carries out the reaction cytidine(49) in tRNA precursor + S-adenosyl-L-methionine = 5-methylcytidine(49) in tRNA precursor + S-adenosyl-L-homocysteine + H(+). Substrate specificity and tendency to aggregate are influenced by archease. Functionally, catalyzes AdoMet-dependent formation of m5C in tRNA. In the presence of protein archease, specifically methylates the cytosine at position 49 (m5C49) of tRNA. In the absence of archease, catalyzes the formation of m5C at many locations in tRNAs or rRNAs. The sequence is that of tRNA (cytosine(49)-C(5))-methyltransferase from Pyrococcus abyssi (strain GE5 / Orsay).